The sequence spans 479 residues: Glycerol-3-phosphate acyltransferase RAM2 (479 aa).

The next 4 helical transmembrane spans lie at 14 to 34 (YFAL…LVLA), 37 to 57 (LAGL…LIFA), 215 to 235 (SPLM…LACL), and 237 to 257 (IAAG…ALGV). An HXXXXD motif motif is present at residues 284–289 (HRTLLD). N448 carries N-linked (GlcNAc...) asparagine glycosylation.

This sequence belongs to the GPAT/DAPAT family.

The protein resides in the membrane. The catalysed reaction is sn-glycerol 3-phosphate + an acyl-CoA = a 1-acyl-sn-glycero-3-phosphate + CoA. It participates in lipid metabolism; glycerolipid metabolism. Involved in the production of cutin monomers. Esterifies acyl-group from acyl-ACP to the sn-2 position of glycerol-3-phosphate, a step in cutin biosynthesis. Required for colonization of the root by mycorrhizal fungi, and appropriate hyphopodia and arbuscule formation. Cutin monomers act as plant signals that promote colonization by arbuscular mycorrhizal fungi. This signaling function has been recruited by pathogenic oomycetes to facilitate appressoria formation and their own invasion. The protein is Glycerol-3-phosphate acyltransferase RAM2 of Petunia hybrida (Petunia).